A 238-amino-acid polypeptide reads, in one-letter code: Survival of motor neuron-related-splicing factor 30 (238 aa).

The Tudor domain maps to 72–132; the sequence is SWKVGDKCMA…KPVEEGRKAK (61 aa). A Nuclear localization signal motif is present at residues 142 to 160; that stretch reads KKEMIAQQREYKKKKALKK. Residue serine 201 is modified to Phosphoserine. N6-acetyllysine is present on lysine 219.

Belongs to the SMN family. As to quaternary structure, associates with spliceosomes. Associates with U4/U5/U6 tri-snRNP and with U2 snRNP.

The protein localises to the nucleus speckle. It is found in the nucleus. The protein resides in the cajal body. In terms of biological role, involved in spliceosome assembly. The protein is Survival of motor neuron-related-splicing factor 30 (Smndc1) of Mus musculus (Mouse).